A 791-amino-acid polypeptide reads, in one-letter code: Organellar oligopeptidase A, chloroplastic/mitochondrial (791 aa).

A chloroplast and mitochondrion-targeting transit peptide spans 1–82 (MLMATPTSRA…SSPPSMSSAA (82 aa)). Coiled coils occupy residues 118–138 (RPGI…LEKS) and 239–259 (DDEK…LSHK). Histidine 571 contributes to the Zn(2+) binding site. Residue glutamate 572 is part of the active site. Zn(2+) is bound by residues histidine 575 and glutamate 601. Position 703 to 709 (703 to 709 (HIFAGGY)) interacts with substrate.

It belongs to the peptidase M3 family. The cofactor is Zn(2+).

The protein localises to the mitochondrion matrix. Its subcellular location is the plastid. It is found in the chloroplast stroma. It catalyses the reaction Hydrolysis of oligopeptides, with broad specificity. Gly or Ala commonly occur as P1 or P1' residues, but more distant residues are also important, as is shown by the fact that Z-Gly-Pro-Gly-|-Gly-Pro-Ala is cleaved, but not Z-(Gly)(5).. Inhibited by salicylic acid. Its function is as follows. Oligopeptidase degrading short peptides from 8 to 23 amino acid residues. Plays a role in the degradation of transit peptides and of peptides derived from other proteolytic events. Does not exhibit a strict cleavage pattern. Binds salicylic acid. The polypeptide is Organellar oligopeptidase A, chloroplastic/mitochondrial (Arabidopsis thaliana (Mouse-ear cress)).